A 377-amino-acid polypeptide reads, in one-letter code: UDP-N,N'-diacetylbacillosamine 2-epimerase (hydrolyzing) (377 aa).

It belongs to the UDP-N-acetylglucosamine 2-epimerase family.

It catalyses the reaction UDP-N,N'-diacetylbacillosamine + H2O = 2,4-diacetamido-2,4,6-trideoxy-alpha-D-mannopyranose + UDP + H(+). In terms of biological role, involved in biosynthesis of legionaminic acid (5,7-diamino-3,5,7,9-tetradeoxy-D-glycero-D-galacto-non-2-ulosonic acid)(Leg), a sialic acid-like derivative that is incorporated into virulence-associated cell surface glycoconjugates such as lipopolysaccharide (LPS) which could be a key determinant in the ability of L.pneumophila to inhibit the fusion of phagosomes with lysosomes. LPS contains a majority alpha2,4-linked homomer of legionaminic acid. Catalyzes the conversion of UDP-N,N'-diacetylbacillosamine (Bac2Ac4Ac) into 2,4-diacetamido-2,4,6-trideoxymannose and UDP. This chain is UDP-N,N'-diacetylbacillosamine 2-epimerase (hydrolyzing), found in Legionella pneumophila subsp. pneumophila (strain Philadelphia 1 / ATCC 33152 / DSM 7513).